Consider the following 260-residue polypeptide: Phosphate import ATP-binding protein PstB (260 aa).

Positions 14–255 (LQIRNLDFFY…PGKKQTEDYI (242 aa)) constitute an ABC transporter domain. Residue 46–53 (GPSGCGKS) coordinates ATP.

This sequence belongs to the ABC transporter superfamily. Phosphate importer (TC 3.A.1.7) family. The complex is composed of two ATP-binding proteins (PstB), two transmembrane proteins (PstC and PstA) and a solute-binding protein (PstS).

It is found in the cell inner membrane. It catalyses the reaction phosphate(out) + ATP + H2O = ADP + 2 phosphate(in) + H(+). Functionally, part of the ABC transporter complex PstSACB involved in phosphate import. Responsible for energy coupling to the transport system. This is Phosphate import ATP-binding protein PstB from Thiobacillus denitrificans (strain ATCC 25259 / T1).